A 233-amino-acid polypeptide reads, in one-letter code: Demethylmenaquinone methyltransferase (233 aa).

S-adenosyl-L-methionine is bound by residues Thr60, Asp81, and 106-107; that span reads DA.

The protein belongs to the class I-like SAM-binding methyltransferase superfamily. MenG/UbiE family.

The catalysed reaction is a 2-demethylmenaquinol + S-adenosyl-L-methionine = a menaquinol + S-adenosyl-L-homocysteine + H(+). It functions in the pathway quinol/quinone metabolism; menaquinone biosynthesis; menaquinol from 1,4-dihydroxy-2-naphthoate: step 2/2. In terms of biological role, methyltransferase required for the conversion of demethylmenaquinol (DMKH2) to menaquinol (MKH2). The sequence is that of Demethylmenaquinone methyltransferase from Staphylococcus saprophyticus subsp. saprophyticus (strain ATCC 15305 / DSM 20229 / NCIMB 8711 / NCTC 7292 / S-41).